A 649-amino-acid polypeptide reads, in one-letter code: MMNQSQRMAPVGSDKELSDLLDFSMMFPLPVANGKGRPASLAGTQFAGSGLEDRPSSGSWGNSDQNSSSFDPSRTYSEGAHFSESHNSLPSSTFLGPGLGGKSSERSAYATFGRDTSVSALTQAGFLPGELGLSSPGPLSPSGVKSGSQYYPSYPSNPRRRAADSGLDTQSKKVRKVPPGLPSSVYPSSSGDSYGRDAAAYPSAKTPGSAYPSPFYVADGSLHPSAELWSPPSQAGFGPMLGDGSSPLPLAPGSSSVGSGTFGGLQQQERMSYQLHGSEVNGTLPAVSSFSAAPGTYGGASGHTPPVSGADSLMGTRGTTASSSGDALGKALASIYSPDHSSNNFSPSPSTPVGSPQGLPGTSQWPRAGAPSALSPTYDGGLHGLSKMEDRLDEAIHVLRSHAVGTASDLHGLLPGHGALTTSFPGPVPLGGRHAGLVGGGHPEDGLTSGTSLLHTHASLPSQASSLPDLSQRPPDSYGGLGRAGAPAGASEIKREEKDDEESTSVADAEEDKKDLKAPRTRTSPDEDEDDLLPPEQKAEREKERRVANNARERLRVRDINEAFKELGRMCQLHLSSEKPQTKLLILHQAVAVILSLEQQVRERNLNPKAACLKRREEEKVSGVVGDPQLALSAAHPGLGEAHNPPGHL.

Disordered stretches follow at residues 34–107 (GKGR…SERS), 127–206 (LPGE…SAKT), 222–267 (LHPS…GLQQ), 291–325 (SAAPGTYGGASGHTPPVSGADSLMGTRGTTASSSG), and 339–382 (DHSS…DGGL). Polar residues-rich tracts occupy residues 56–76 (SSGSWGNSDQNSSSFDPSRTY) and 85–94 (SHNSLPSSTF). Positions 127–143 (LPGELGLSSPGPLSPSG) are enriched in low complexity. Residues serine 135 and serine 140 each carry the phosphoserine modification. The span at 145-156 (KSGSQYYPSYPS) shows a compositional bias: polar residues. The Nuclear localization signal motif lies at 171-177 (SKKVRKV). Low complexity-rich tracts occupy residues 182–193 (PSSVYPSSSGDS) and 242–259 (GDGSSPLPLAPGSSSVGS). A compositionally biased stretch (low complexity) spans 339 to 352 (DHSSNNFSPSPSTP). Threonine 351 carries the post-translational modification Phosphothreonine. Serine 355 carries the phosphoserine modification. At arginine 367 the chain carries Omega-N-methylarginine. A Phosphoserine modification is found at serine 375. A leucine-zipper region spans residues 385–420 (LSKMEDRLDEAIHVLRSHAVGTASDLHGLLPGHGAL). The tract at residues 431–547 (GGRHAGLVGG…KAEREKERRV (117 aa)) is disordered. A compositionally biased stretch (polar residues) spans 448-469 (TSGTSLLHTHASLPSQASSLPD). Lysine 494 participates in a covalent cross-link: Glycyl lysine isopeptide (Lys-Gly) (interchain with G-Cter in SUMO2). Position 524 is a phosphoserine (serine 524). Phosphothreonine is present on glutamate 529. Positions 537–547 (QKAEREKERRV) are enriched in basic and acidic residues. The region spanning 544–597 (ERRVANNARERLRVRDINEAFKELGRMCQLHLSSEKPQTKLLILHQAVAVILSL) is the bHLH domain. Lysine 620 participates in a covalent cross-link: Glycyl lysine isopeptide (Lys-Gly) (interchain with G-Cter in SUMO2).

Homodimer. Heterodimer; efficient DNA binding requires dimerization with another bHLH protein. Forms a heterodimer with TWIST1 and TWIST2. Forms a heterodimer with NEUROD1; the heterodimer is inhibited in presence of ID2, but not NR0B2, to E-box element. Forms a heterodimer with TCF15; the heterodimer binds E-box element. Forms a heterodimer with MYOG; heterodimerization enhances MYOG DNA-binding and transcriptional activities. Forms a heterodimer with ATOH8; repress transcription of TCF3 and TCF3-NEUROG3 dimer-induced transactivation of E box-dependent promoters. Component of a nuclear TAL-1 complex composed at least of CBFA2T3, LDB1, TAL1 and TCF3. Interacts with NEUROD2. Interacts with EP300. Interacts with PTF1A, TGFB1I1 and UBE2I. Interacts with BHLHA9. Interacts with ASB2; the interaction is mediated by SKP2 and targets TCF3 for Notch-induced proteasomal degradation. Interacts with transcription factor ASCL5/AmeloD. As to quaternary structure, interacts with RALGAPA1. Interacts with FIGLA. In terms of assembly, forms a heterodimer with ATOH7; required for ATOH7 DNA-binding. In terms of processing, phosphorylated following NGF stimulation. Undergoes Notch-induced ubiquitination and subsequent proteasomal degradation which is mediated by ASB1 or ASB2, the substrate-recognition components of probable ECS E3 ubiquitin-protein ligase complexes.

It localises to the nucleus. Transcriptional regulator. Involved in the initiation of neuronal differentiation and mesenchymal to epithelial transition. Heterodimers between TCF3 and tissue-specific basic helix-loop-helix (bHLH) proteins play major roles in determining tissue-specific cell fate during embryogenesis, like muscle or early B-cell differentiation. Together with TCF15, required for the mesenchymal to epithelial transition. Dimers bind DNA on E-box motifs: 5'-CANNTG-3'. Binds to the kappa-E2 site in the kappa immunoglobulin gene enhancer. Binds to IEB1 and IEB2, which are short DNA sequences in the insulin gene transcription control region. Functionally, facilitates ATOH7 binding to DNA at the consensus sequence 5'-CAGGTG-3', and positively regulates transcriptional activity. In Mesocricetus auratus (Golden hamster), this protein is Transcription factor E2-alpha (TCF3).